Consider the following 711-residue polypeptide: Retrovirus-related Pol polyprotein from type-1 retrotransposable element R2 (711 aa).

Residues Leu-45 to Phe-323 enclose the Reverse transcriptase domain. Residues Leu-444–Ala-711 form a nucleic acid-binding endonuclease region.

The catalysed reaction is DNA(n) + a 2'-deoxyribonucleoside 5'-triphosphate = DNA(n+1) + diphosphate. This Popillia japonica (Japanese beetle) protein is Retrovirus-related Pol polyprotein from type-1 retrotransposable element R2.